We begin with the raw amino-acid sequence, 806 residues long: Glycerol-3-phosphate acyltransferase (806 aa).

Positions 305–310 (CHRSHM) match the HXXXXD motif motif.

It belongs to the GPAT/DAPAT family.

The protein resides in the cell inner membrane. The enzyme catalyses sn-glycerol 3-phosphate + an acyl-CoA = a 1-acyl-sn-glycero-3-phosphate + CoA. It functions in the pathway phospholipid metabolism; CDP-diacylglycerol biosynthesis; CDP-diacylglycerol from sn-glycerol 3-phosphate: step 1/3. The polypeptide is Glycerol-3-phosphate acyltransferase (Salmonella agona (strain SL483)).